Consider the following 380-residue polypeptide: Anhydro-N-acetylmuramic acid kinase (380 aa).

17 to 24 (GTSMDGAD) is an ATP binding site.

It belongs to the anhydro-N-acetylmuramic acid kinase family.

It catalyses the reaction 1,6-anhydro-N-acetyl-beta-muramate + ATP + H2O = N-acetyl-D-muramate 6-phosphate + ADP + H(+). The protein operates within amino-sugar metabolism; 1,6-anhydro-N-acetylmuramate degradation. It functions in the pathway cell wall biogenesis; peptidoglycan recycling. Its function is as follows. Catalyzes the specific phosphorylation of 1,6-anhydro-N-acetylmuramic acid (anhMurNAc) with the simultaneous cleavage of the 1,6-anhydro ring, generating MurNAc-6-P. Is required for the utilization of anhMurNAc either imported from the medium or derived from its own cell wall murein, and thus plays a role in cell wall recycling. The polypeptide is Anhydro-N-acetylmuramic acid kinase (Cupriavidus metallidurans (strain ATCC 43123 / DSM 2839 / NBRC 102507 / CH34) (Ralstonia metallidurans)).